The sequence spans 384 residues: Viral protein 1 (384 aa).

In Chaetoceros setoense (Chaetoceros setoense DNA virus), this protein is Viral protein 1.